Here is a 284-residue protein sequence, read N- to C-terminus: MKQKVVSIGDINVANDLPFVLFGGMNVLESRDLAMRICEHYVTVTQKLGIPYVFKASFDKANRSSIHSYRGPGLEEGMKIFQELKQTFGVKIITDVHEPSQAQPVADVVDVIQLPAFLARQTDLVEAMAKTGAVINVKKPQFVSPGQMGNIVDKFKEGGNDKVILCDRGANFGYDNLVVDMLGFSVMKKVSGNSPVIFDVTHALQCRDPFGAASGGRRAQVTELARAGMAVGLAGLFIEAHPDPEHAKCDGPSALPLAKLEPFLKQMKAIDELVKGFEELDTSK.

The protein belongs to the KdsA family.

Its subcellular location is the cytoplasm. It catalyses the reaction D-arabinose 5-phosphate + phosphoenolpyruvate + H2O = 3-deoxy-alpha-D-manno-2-octulosonate-8-phosphate + phosphate. It participates in carbohydrate biosynthesis; 3-deoxy-D-manno-octulosonate biosynthesis; 3-deoxy-D-manno-octulosonate from D-ribulose 5-phosphate: step 2/3. It functions in the pathway bacterial outer membrane biogenesis; lipopolysaccharide biosynthesis. This is 2-dehydro-3-deoxyphosphooctonate aldolase from Escherichia fergusonii (strain ATCC 35469 / DSM 13698 / CCUG 18766 / IAM 14443 / JCM 21226 / LMG 7866 / NBRC 102419 / NCTC 12128 / CDC 0568-73).